The following is a 56-amino-acid chain: Small ribosomal subunit protein uS14B (56 aa).

The Zn(2+) site is built by Cys21 and Cys24. Ser25 carries the post-translational modification Phosphoserine. Positions 39 and 42 each coordinate Zn(2+).

It belongs to the universal ribosomal protein uS14 family. In terms of assembly, component of the small ribosomal subunit (SSU). Mature yeast ribosomes consist of a small (40S) and a large (60S) subunit. The 40S small subunit contains 1 molecule of ribosomal RNA (18S rRNA) and 33 different proteins (encoded by 57 genes). The large 60S subunit contains 3 rRNA molecules (25S, 5.8S and 5S rRNA) and 46 different proteins (encoded by 81 genes). Zn(2+) serves as cofactor.

The protein resides in the cytoplasm. In terms of biological role, component of the ribosome, a large ribonucleoprotein complex responsible for the synthesis of proteins in the cell. The small ribosomal subunit (SSU) binds messenger RNAs (mRNAs) and translates the encoded message by selecting cognate aminoacyl-transfer RNA (tRNA) molecules. The large subunit (LSU) contains the ribosomal catalytic site termed the peptidyl transferase center (PTC), which catalyzes the formation of peptide bonds, thereby polymerizing the amino acids delivered by tRNAs into a polypeptide chain. The nascent polypeptides leave the ribosome through a tunnel in the LSU and interact with protein factors that function in enzymatic processing, targeting, and the membrane insertion of nascent chains at the exit of the ribosomal tunnel. The sequence is that of Small ribosomal subunit protein uS14B from Saccharomyces cerevisiae (strain ATCC 204508 / S288c) (Baker's yeast).